The following is a 394-amino-acid chain: 1-deoxy-D-xylulose 5-phosphate reductoisomerase (394 aa).

Thr-10, Gly-11, Ser-12, Ile-13, Gly-38, Arg-39, Asn-40, and Asn-123 together coordinate NADPH. Lys-124 serves as a coordination point for 1-deoxy-D-xylulose 5-phosphate. Position 125 (Glu-125) interacts with NADPH. Asp-149 contacts Mn(2+). 1-deoxy-D-xylulose 5-phosphate-binding residues include Ser-150, Glu-151, Ser-175, and His-198. Position 151 (Glu-151) interacts with Mn(2+). Residue Gly-204 participates in NADPH binding. Residues Ser-211, Asn-216, Lys-217, and Glu-220 each contribute to the 1-deoxy-D-xylulose 5-phosphate site. Residue Glu-220 participates in Mn(2+) binding.

This sequence belongs to the DXR family. The cofactor is Mg(2+). Mn(2+) serves as cofactor.

It carries out the reaction 2-C-methyl-D-erythritol 4-phosphate + NADP(+) = 1-deoxy-D-xylulose 5-phosphate + NADPH + H(+). The protein operates within isoprenoid biosynthesis; isopentenyl diphosphate biosynthesis via DXP pathway; isopentenyl diphosphate from 1-deoxy-D-xylulose 5-phosphate: step 1/6. In terms of biological role, catalyzes the NADPH-dependent rearrangement and reduction of 1-deoxy-D-xylulose-5-phosphate (DXP) to 2-C-methyl-D-erythritol 4-phosphate (MEP). This is 1-deoxy-D-xylulose 5-phosphate reductoisomerase from Cereibacter sphaeroides (strain KD131 / KCTC 12085) (Rhodobacter sphaeroides).